The primary structure comprises 140 residues: MPTINQLVRNGRTDKVWKSKSPALNKGFNSLKKKSTDISAPQKRGVCTRVGTMTPKKPNSALRKYARVRLTNGIEVTAYIPGIGHNLQEHSVVLIRGGRVKDLPGVRYHIVRGALDTAGVDKRMQGRSKYGTKRPKPAKK.

3-methylthioaspartic acid is present on Asp102.

This sequence belongs to the universal ribosomal protein uS12 family. In terms of assembly, part of the 30S ribosomal subunit. Contacts proteins S8 and S17. May interact with IF1 in the 30S initiation complex.

Functionally, with S4 and S5 plays an important role in translational accuracy. Interacts with and stabilizes bases of the 16S rRNA that are involved in tRNA selection in the A site and with the mRNA backbone. Located at the interface of the 30S and 50S subunits, it traverses the body of the 30S subunit contacting proteins on the other side and probably holding the rRNA structure together. The combined cluster of proteins S8, S12 and S17 appears to hold together the shoulder and platform of the 30S subunit. In Bacillus cereus (strain G9842), this protein is Small ribosomal subunit protein uS12.